The primary structure comprises 265 residues: Flap endonuclease Xni (265 aa).

Residue Asp-111 coordinates Mg(2+). The 5'-3' exonuclease domain maps to 167–260 (VVPAQLVDFW…NLREIRYPPA (94 aa)). Positions 178, 189, and 192 each coordinate K(+). The segment at 191–196 (GIGPKT) is interaction with DNA.

It belongs to the Xni family. Mg(2+) is required as a cofactor. Requires K(+) as cofactor.

Its function is as follows. Has flap endonuclease activity. During DNA replication, flap endonucleases cleave the 5'-overhanging flap structure that is generated by displacement synthesis when DNA polymerase encounters the 5'-end of a downstream Okazaki fragment. This is Flap endonuclease Xni from Aeromonas salmonicida (strain A449).